A 461-amino-acid chain; its full sequence is UDP-glycosyltransferase 88B1 (461 aa).

Residues Ser-278, 340–341 (WA), 358–366 (HCGWNSSLE), and 380–383 (YAEQ) each bind UDP-alpha-D-glucose.

Belongs to the UDP-glycosyltransferase family.

May glycosylate diterpenes or flavonols in leaves. The sequence is that of UDP-glycosyltransferase 88B1 from Stevia rebaudiana (Stevia).